The primary structure comprises 265 residues: Thymidylate synthase (265 aa).

Arg21 lines the dUMP pocket. His51 contributes to the (6R)-5,10-methylene-5,6,7,8-tetrahydrofolate binding site. Residue Arg127–Arg128 participates in dUMP binding. The active-site Nucleophile is Cys147. DUMP-binding positions include Arg167 to Asp170, Asn178, and His208 to Tyr210. Residue Asp170 participates in (6R)-5,10-methylene-5,6,7,8-tetrahydrofolate binding. (6R)-5,10-methylene-5,6,7,8-tetrahydrofolate is bound at residue Ser264.

The protein belongs to the thymidylate synthase family. Bacterial-type ThyA subfamily. In terms of assembly, homodimer.

Its subcellular location is the cytoplasm. The enzyme catalyses dUMP + (6R)-5,10-methylene-5,6,7,8-tetrahydrofolate = 7,8-dihydrofolate + dTMP. Its pathway is pyrimidine metabolism; dTTP biosynthesis. In terms of biological role, catalyzes the reductive methylation of 2'-deoxyuridine-5'-monophosphate (dUMP) to 2'-deoxythymidine-5'-monophosphate (dTMP) while utilizing 5,10-methylenetetrahydrofolate (mTHF) as the methyl donor and reductant in the reaction, yielding dihydrofolate (DHF) as a by-product. This enzymatic reaction provides an intracellular de novo source of dTMP, an essential precursor for DNA biosynthesis. This is Thymidylate synthase from Neisseria gonorrhoeae.